The sequence spans 259 residues: Global transcriptional regulator CodY (259 aa).

The interval Met-1 to Leu-155 is GAF domain. The segment at residues Ala-203–Arg-222 is a DNA-binding region (H-T-H motif). At Ser-215 the chain carries Phosphoserine.

Belongs to the CodY family.

It is found in the cytoplasm. In terms of biological role, DNA-binding global transcriptional regulator which is involved in the adaptive response to starvation and acts by directly or indirectly controlling the expression of numerous genes in response to nutrient availability. During rapid exponential growth, CodY is highly active and represses genes whose products allow adaptation to nutrient depletion. The sequence is that of Global transcriptional regulator CodY from Geobacillus thermodenitrificans (strain NG80-2).